The following is a 333-amino-acid chain: Homeobox protein Hox-D13 (333 aa).

A disordered region spans residues 1-24 (MDGLRTDGGAAGAAPASSSSSSSV). The segment covering 12 to 24 (GAAPASSSSSSSV) has biased composition (low complexity). Residues 266–325 (GRKKRVPYTKLQLKELENEYAINKFINKDKRRRISAATNLSERQVTIWFQNRRVKDKKIV) constitute a DNA-binding region (homeobox).

The protein belongs to the Abd-B homeobox family.

The protein resides in the nucleus. Its function is as follows. Sequence-specific transcription factor that binds gene promoters and activates their transcription. Part of a developmental regulatory system that provides cells with specific positional identities on the anterior-posterior axis. In Carollia perspicillata (Seba's short-tailed bat), this protein is Homeobox protein Hox-D13 (HOXD13).